A 366-amino-acid polypeptide reads, in one-letter code: Growth hormone secretagogue receptor type 1 (366 aa).

Residues 1-40 (MWNATPSEEPGPNLTLPDLGWDAPPENDSLVEELLPLFPT) are Extracellular-facing. Asn-13 and Asn-27 each carry an N-linked (GlcNAc...) asparagine glycan. A helical transmembrane segment spans residues 41–66 (PLLAGVTATCVALFVVGIAGNLLTML). Over 67-72 (VVSRFR) the chain is Cytoplasmic. A helical membrane pass occupies residues 73–96 (EMRTTTNLYLSSMAFSDLLIFLCM). The Extracellular segment spans residues 97–117 (PLDLFRLWQYRPWNLGNLLCK). Cysteines 116 and 198 form a disulfide. Residues 118-139 (LFQFVSESCTYATVLTITALSV) form a helical membrane-spanning segment. Over 140-162 (ERYFAICFPLRAKVVVTKGRVKL) the chain is Cytoplasmic. Residues 163–183 (VILVIWAVAFCSAGPIFVLVG) form a helical membrane-spanning segment. The Extracellular segment spans residues 184 to 211 (VEHDNGTDPRDTNECRATEFAVRSGLLT). Residues 212–235 (VMVWVSSVFFFLPVFCLTVLYSLI) form a helical membrane-spanning segment. The Cytoplasmic portion of the chain corresponds to 236–263 (GRKLWRRKRGEAAVGSSLRDQNHKQTVK). Residues 264-285 (MLAVVVFAFILCWLPFHVGRYL) form a helical membrane-spanning segment. At 286–302 (FSKSLEPGSVEIAQISQ) the chain is on the extracellular side. A helical transmembrane segment spans residues 303-326 (YCNLVSFVLFYLSAAINPILYNIM). The Cytoplasmic portion of the chain corresponds to 327-366 (SKKYRVAVFKLLGFEPFSQRKLSTLKDESSRAWTESSINT).

This sequence belongs to the G-protein coupled receptor 1 family. As to expression, pituitary and hypothalamus.

The protein resides in the cell membrane. Its function is as follows. Receptor for ghrelin, coupled to G-alpha-11 proteins. Stimulates growth hormone secretion. Also binds other growth hormone releasing peptides (GHRP) (e.g. Met-enkephalin and GHRP-6) as well as non-peptide, low molecular weight secretagogues (e.g. L-692,429, MK-0677, adenosine). In Sus scrofa (Pig), this protein is Growth hormone secretagogue receptor type 1 (GHSR).